The sequence spans 288 residues: Transmembrane protein 163 (288 aa).

Over residues 1–11 the composition is skewed to basic and acidic residues; the sequence is MERAPGSERRS. Positions 1 to 64 are disordered; sequence MERAPGSERR…ESGQFSDGFE (64 aa). Residues 1–87 are Cytoplasmic-facing; it reads MERAPGSERR…HEAQNYRKKA (87 aa). A Phosphoserine modification is found at serine 11. The span at 12–24 shows a compositional bias: pro residues; the sequence is PPGPGVPRPPPRG. A compositionally biased stretch (low complexity) spans 25–42; the sequence is HAPSTAAPAPNPAPLSSS. Residues 41-71 form a required for interaction with MCOLN1 region; the sequence is SSMQPDEERQPRISESGQFSDGFEDRGLLES. Residues serine 54, serine 56, and serine 60 each carry the phosphoserine modification. A helical transmembrane segment spans residues 88–108; it reads LWVSWLSIIVTLALAVAAFTV. Residues 109–115 lie on the Extracellular side of the membrane; it reads SVMRYSA. Residues 116-136 form a helical membrane-spanning segment; it reads SAFGFAFDAILDVLSSAIVLW. The Cytoplasmic portion of the chain corresponds to 137 to 149; the sequence is RYSNAAAVHSAHR. Residues 150-170 form a helical membrane-spanning segment; the sequence is EYIACVILGVIFLLSSICIVV. Topologically, residues 171–186 are extracellular; the sequence is KAIHDLSTRLLPEVDD. Residues 187-207 form a helical membrane-spanning segment; the sequence is FLFSVSILSGILCSVLAVLKF. Residues 208-216 lie on the Cytoplasmic side of the membrane; sequence MLGKVLTSR. A helical membrane pass occupies residues 217–237; it reads ALITDGFNSLVGGVMGFSILL. The Extracellular segment spans residues 238–254; sequence SAEVFKHNAAVWYLDGS. The chain crosses the membrane as a helical span at residues 255-275; sequence IGVLIGLTIFAYGVKLLIDMV. Topologically, residues 276–288 are cytoplasmic; the sequence is PRVRQTRHYEMFE.

The protein belongs to the TMEM163 family. As to quaternary structure, homodimer. Interacts with MCOLN1. Interacts with SLC30A1, SLC30A2, SLC30A3 and SLC30A4. Strongly expressed in brain. Also detected in lung, liver, kidney and spleen. Mainly expressed in the glutaminergic neuron subpopulations.

Its subcellular location is the cytoplasmic vesicle. It is found in the secretory vesicle. The protein resides in the synaptic vesicle membrane. The protein localises to the early endosome membrane. It localises to the late endosome membrane. Its subcellular location is the lysosome membrane. It is found in the cell membrane. It catalyses the reaction Zn(2+)(in) = Zn(2+)(out). Zinc ion transporter that mediates zinc efflux and plays a crucial role in intracellular zinc homeostasis. Binds the divalent cations Zn(2+), Ni(2+), and to a minor extent Cu(2+). Is a functional modulator of P2X purinoceptors, including P2RX1, P2RX3, P2RX4 and P2RX7. Plays a role in central nervous system development and is required for myelination, and survival and proliferation of oligodendrocytes. This is Transmembrane protein 163 (Tmem163) from Rattus norvegicus (Rat).